A 424-amino-acid polypeptide reads, in one-letter code: Enolase (424 aa).

Position 162 (Gln-162) interacts with (2R)-2-phosphoglycerate. The Proton donor role is filled by Glu-204. Positions 241, 284, and 311 each coordinate Mg(2+). Residues Lys-336, Arg-365, Ser-366, and Lys-387 each coordinate (2R)-2-phosphoglycerate. Lys-336 (proton acceptor) is an active-site residue.

The protein belongs to the enolase family. Mg(2+) is required as a cofactor.

It localises to the cytoplasm. The protein resides in the secreted. The protein localises to the cell surface. The catalysed reaction is (2R)-2-phosphoglycerate = phosphoenolpyruvate + H2O. Its pathway is carbohydrate degradation; glycolysis; pyruvate from D-glyceraldehyde 3-phosphate: step 4/5. In terms of biological role, catalyzes the reversible conversion of 2-phosphoglycerate (2-PG) into phosphoenolpyruvate (PEP). It is essential for the degradation of carbohydrates via glycolysis. This chain is Enolase, found in Rhizobium johnstonii (strain DSM 114642 / LMG 32736 / 3841) (Rhizobium leguminosarum bv. viciae).